A 577-amino-acid chain; its full sequence is Lysine-specific demethylase 7B (577 aa).

Residues 5 to 56 (QLYCVCRQPYDVSRFMIECDICKDWFHGSCVEVEEHYAVDIDVYHCPNCDVH) form a PHD-type zinc finger. In terms of domain architecture, JmjC spans 198-354 (FSDTKMAELV…MQLRCYEMER (157 aa)). T247 provides a ligand contact to substrate. Fe cation-binding residues include H250 and D252. A substrate-binding site is contributed by K267. H322 contributes to the Fe cation binding site. Positions 460-513 (CPSTRSAHERGSHARKTARRLRGHHHHHHRHHHHHHHHHHHNHQHSDGPKAPSH) are disordered. Basic residues predominate over residues 472 to 502 (HARKTARRLRGHHHHHHRHHHHHHHHHHHNH).

The protein belongs to the JHDM1 histone demethylase family. JHDM1D subfamily. Fe(2+) is required as a cofactor. Predominantly expressed in brain.

Its subcellular location is the nucleus. Histone demethylase required for brain development. Specifically demethylates dimethylated 'Lys-9' and 'Lys-27' (H3K9me2 and H3K27me2, respectively) of histone H3 and monomethylated histone H4 'Lys-20' residue (H4K20Me1), thereby playing a central role in histone code. This chain is Lysine-specific demethylase 7B (jhdm1db), found in Danio rerio (Zebrafish).